The primary structure comprises 398 residues: Tryptophan synthase beta chain (398 aa).

Lysine 92 carries the N6-(pyridoxal phosphate)lysine modification.

Belongs to the TrpB family. As to quaternary structure, tetramer of two alpha and two beta chains. Pyridoxal 5'-phosphate is required as a cofactor.

It carries out the reaction (1S,2R)-1-C-(indol-3-yl)glycerol 3-phosphate + L-serine = D-glyceraldehyde 3-phosphate + L-tryptophan + H2O. The protein operates within amino-acid biosynthesis; L-tryptophan biosynthesis; L-tryptophan from chorismate: step 5/5. Functionally, the beta subunit is responsible for the synthesis of L-tryptophan from indole and L-serine. The polypeptide is Tryptophan synthase beta chain (Nitrosospira multiformis (strain ATCC 25196 / NCIMB 11849 / C 71)).